The following is a 164-amino-acid chain: UPF0114 protein YqhA (164 aa).

A run of 3 helical transmembrane segments spans residues 15–35, 53–73, and 136–156; these read LLAP…LKFF, LILV…LVMV, and LMWY…MGYL.

It belongs to the UPF0114 family.

The protein localises to the cell membrane. The sequence is that of UPF0114 protein YqhA from Escherichia coli O6:H1 (strain CFT073 / ATCC 700928 / UPEC).